The sequence spans 213 residues: Thymidylate kinase (213 aa).

An ATP-binding site is contributed by 10–17 (GLEGAGKT).

Belongs to the thymidylate kinase family.

The catalysed reaction is dTMP + ATP = dTDP + ADP. Functionally, phosphorylation of dTMP to form dTDP in both de novo and salvage pathways of dTTP synthesis. The protein is Thymidylate kinase of Shigella boydii serotype 18 (strain CDC 3083-94 / BS512).